The primary structure comprises 472 residues: ATP synthase subunit beta (472 aa).

157-164 (GGAGVGKT) contributes to the ATP binding site.

The protein belongs to the ATPase alpha/beta chains family. In terms of assembly, F-type ATPases have 2 components, CF(1) - the catalytic core - and CF(0) - the membrane proton channel. CF(1) has five subunits: alpha(3), beta(3), gamma(1), delta(1), epsilon(1). CF(0) has three main subunits: a(1), b(2) and c(9-12). The alpha and beta chains form an alternating ring which encloses part of the gamma chain. CF(1) is attached to CF(0) by a central stalk formed by the gamma and epsilon chains, while a peripheral stalk is formed by the delta and b chains.

The protein localises to the cell membrane. The enzyme catalyses ATP + H2O + 4 H(+)(in) = ADP + phosphate + 5 H(+)(out). Functionally, produces ATP from ADP in the presence of a proton gradient across the membrane. The catalytic sites are hosted primarily by the beta subunits. This Desulforudis audaxviator (strain MP104C) protein is ATP synthase subunit beta.